Reading from the N-terminus, the 170-residue chain is Translation machinery-associated protein 16 homolog (170 aa).

Belongs to the TMA16 family.

The chain is Translation machinery-associated protein 16 homolog from Dictyostelium discoideum (Social amoeba).